The chain runs to 97 residues: Plastocyanin A/B (97 aa).

Residues 1-97 (AEVKLGSDDG…AGMKGEVTVN (97 aa)) form the Plastocyanin-like domain. Cu cation-binding residues include His37, Cys82, His85, and Met90.

The protein belongs to the plastocyanin family. It depends on Cu(2+) as a cofactor.

It localises to the plastid. The protein localises to the chloroplast thylakoid membrane. In terms of biological role, participates in electron transfer between P700 and the cytochrome b6-f complex in photosystem I. This chain is Plastocyanin A/B (PETE), found in Petroselinum crispum (Parsley).